A 318-amino-acid polypeptide reads, in one-letter code: Ankyrin repeat and SOCS box protein 7 (318 aa).

ANK repeat units follow at residues 13 to 42 (QEEL…SPNG), 46 to 75 (NGWT…DPTV), 80 to 109 (GGFT…RSDI), 116 to 145 (DGWT…EVDP), 149 to 178 (KGTT…NIDI), 180 to 208 (NGFL…DTNL), and 213 to 242 (DGQT…DTNT). Residues 265–318 (LDFLQDVTRQPRTLQDLCRIKIRQCIGLQNLKLLDELPIAKVMKDYLKHKFDDI) enclose the SOCS box domain.

The protein belongs to the ankyrin SOCS box (ASB) family. In terms of assembly, interacts with CUL5. Interacts with RNF7. Interacts with PSRC1.

It localises to the nucleus. The protein resides in the cytoplasm. Its pathway is protein modification; protein ubiquitination. In terms of biological role, probable substrate-recognition component of a SCF-like ECS (Elongin-Cullin-SOCS-box protein) E3 ubiquitin-protein ligase complex which mediates the ubiquitination and subsequent proteasomal degradation of target proteins. Plays a role in spindle dynamics and genome integrity by targeting the mitotic progression protein PSRC1 for proteasomal degradation in a cell cycle-dependent manner. Also participates in meiosis by mediating the proper attachment between kinetochores and microtubules. This Mus musculus (Mouse) protein is Ankyrin repeat and SOCS box protein 7 (Asb7).